Here is a 398-residue protein sequence, read N- to C-terminus: L-talarate/galactarate dehydratase (398 aa).

Substrate contacts are provided by residues 46–48 (DAK), 82–83 (KR), and K195. Catalysis depends on K197, which acts as the Proton acceptor. A Mg(2+)-binding site is contributed by D226. N228 lines the substrate pocket. Residues E252 and E278 each coordinate Mg(2+). Residue H328 is the Proton donor/acceptor of the active site. E348 contacts substrate.

Belongs to the mandelate racemase/muconate lactonizing enzyme family. Homooctamer; tetramer of dimers. Mg(2+) serves as cofactor.

It carries out the reaction L-altrarate = 5-dehydro-4-deoxy-D-glucarate + H2O. The enzyme catalyses galactarate = 5-dehydro-4-deoxy-D-glucarate + H2O. It catalyses the reaction L-altrarate = galactarate. Competitively inhibited by tartronate. Functionally, catalyzes the efficient dehydration of both L-talarate (also called L-altrarate) and galactarate to 5-keto-4-deoxy-D-glucarate (5-KDG). Also catalyzes the epimerization of L-talarate to galactarate; epimerization occurs in competition with dehydration. Is required for the utilization of L-talarate as a carbon source. Also functions in galactarate utilization. Is not active on other acid sugars. The sequence is that of L-talarate/galactarate dehydratase from Salmonella typhimurium (strain LT2 / SGSC1412 / ATCC 700720).